The chain runs to 548 residues: Copine-2 (548 aa).

C2 domains follow at residues 6–131 and 138–263; these read DGGA…TRPL and PAGK…PLEI. Positions 39, 45, 97, 99, 102, 109, 170, 176, 232, 234, and 240 each coordinate Ca(2+). Residues 247–304 form a linker region region; sequence TSVLQMSEARDGVPLEIECINPKKQRKKKSYKNSGIIILRSCKIHRNYSFLDYILGGC. A VWFA domain is found at 305 to 507; that stretch reads QLMFTVGIDF…AARDIVQFVP (203 aa).

It belongs to the copine family. It depends on Ca(2+) as a cofactor.

Its subcellular location is the cytoplasm. It is found in the nucleus. The protein localises to the cell membrane. Its function is as follows. Calcium-dependent phospholipid-binding protein that plays a role in calcium-mediated intracellular processes. Exhibits calcium-dependent cell membrane binding properties. The protein is Copine-2 of Mus musculus (Mouse).